The primary structure comprises 653 residues: Protease 1 (653 aa).

Positions 1-20 (MKRICGSLLLLGLSISAALA) form a signal peptide, or 27. Residues 21-205 (APASRPAAFD…RRLAAASGEK (185 aa)) constitute a propeptide that is removed on maturation. 3 cysteine pairs are disulfide-bonded: C211–C421, C217–C285, and C241–C263. Catalysis depends on charge relay system residues H262, D318, and S399. Residues 474–553 (NTPPVANFTS…TNTKTGSVTV (80 aa)) enclose the PKD domain. A propeptide spans 474–653 (NTPPVANFTS…AAQRAPGSCG (180 aa)) (thr/Ser-rich). Residues 555–653 (GGPGAQTYTN…AAQRAPGSCG (99 aa)) form the P/Homo B domain.

It belongs to the peptidase S1 family. In terms of processing, three disulfide bonds are present.

It localises to the secreted. It catalyses the reaction Preferential cleavage: Lys-|-Xaa, including Lys-|-Pro.. This chain is Protease 1, found in Achromobacter lyticus.